The primary structure comprises 297 residues: Small ribosomal subunit protein uS2 (297 aa).

The segment covering 263–289 (AAPTSWEADGGDWAASSAAPAGESWAE) has biased composition (low complexity). The segment at 263-297 (AAPTSWEADGGDWAASSAAPAGESWAETQPAEAKW) is disordered.

The protein belongs to the universal ribosomal protein uS2 family. In terms of assembly, component of the small ribosomal subunit. Mature ribosomes consist of a small (40S) and a large (60S) subunit. The 40S subunit contains about 33 different proteins and 1 molecule of RNA (18S). The 60S subunit contains about 49 different proteins and 3 molecules of RNA (25S, 5.8S and 5S). Interacts with rps21.

The protein localises to the cytoplasm. Required for the assembly and/or stability of the 40S ribosomal subunit. Required for the processing of the 20S rRNA-precursor to mature 18S rRNA in a late step of the maturation of 40S ribosomal subunits. This is Small ribosomal subunit protein uS2 (rps0) from Neosartorya fischeri (strain ATCC 1020 / DSM 3700 / CBS 544.65 / FGSC A1164 / JCM 1740 / NRRL 181 / WB 181) (Aspergillus fischerianus).